A 389-amino-acid polypeptide reads, in one-letter code: PqqA peptide cyclase (389 aa).

The region spanning 19 to 235 is the Radical SAM core domain; the sequence is VGLPLWLLAE…NEYRVRLEAE (217 aa). Positions 33, 37, and 40 each coordinate [4Fe-4S] cluster.

Belongs to the radical SAM superfamily. PqqE family. In terms of assembly, interacts with PqqD. The interaction is necessary for activity of PqqE. [4Fe-4S] cluster serves as cofactor.

It catalyses the reaction [PQQ precursor protein] + S-adenosyl-L-methionine = E-Y cross-linked-[PQQ precursor protein] + 5'-deoxyadenosine + L-methionine + H(+). The protein operates within cofactor biosynthesis; pyrroloquinoline quinone biosynthesis. Its function is as follows. Catalyzes the cross-linking of a glutamate residue and a tyrosine residue in the PqqA protein as part of the biosynthesis of pyrroloquinoline quinone (PQQ). The polypeptide is PqqA peptide cyclase (Pseudomonas savastanoi pv. phaseolicola (strain 1448A / Race 6) (Pseudomonas syringae pv. phaseolicola (strain 1448A / Race 6))).